A 485-amino-acid chain; its full sequence is Leukocyte receptor cluster member 9 (485 aa).

The segment at 8–35 (SEAPAVCRFFLEGRCRFGARCRQPHPGA) adopts a C3H1-type zinc-finger fold. The segment at 212–247 (ETRTGLDSSLETPEVDGPTKETGLNGTTELEMPDPS) is disordered.

The polypeptide is Leukocyte receptor cluster member 9 (Leng9) (Mus musculus (Mouse)).